The primary structure comprises 88 residues: Small ribosomal subunit protein bS20 (88 aa).

The protein belongs to the bacterial ribosomal protein bS20 family.

Binds directly to 16S ribosomal RNA. This chain is Small ribosomal subunit protein bS20, found in Rhodospirillum rubrum (strain ATCC 11170 / ATH 1.1.1 / DSM 467 / LMG 4362 / NCIMB 8255 / S1).